The following is a 286-amino-acid chain: Tyrosine recombinase Tlet_1492 (286 aa).

In terms of domain architecture, Core-binding (CB) spans 1-86 (MERILQNFSD…SLRSFFNYLQ (86 aa)). In terms of domain architecture, Tyr recombinase spans 107–280 (RIPDFLLPSE…VDQEKFDAIN (174 aa)). Catalysis depends on residues Arg143, Lys168, His232, Arg235, and His258. Tyr267 acts as the O-(3'-phospho-DNA)-tyrosine intermediate in catalysis.

Belongs to the 'phage' integrase family.

It is found in the cytoplasm. In terms of biological role, site-specific tyrosine recombinase, which acts by catalyzing the cutting and rejoining of the recombining DNA molecules. The protein is Tyrosine recombinase Tlet_1492 of Pseudothermotoga lettingae (strain ATCC BAA-301 / DSM 14385 / NBRC 107922 / TMO) (Thermotoga lettingae).